The sequence spans 180 residues: Adenine phosphoribosyltransferase (180 aa).

Belongs to the purine/pyrimidine phosphoribosyltransferase family. In terms of assembly, homodimer.

Its subcellular location is the cytoplasm. It catalyses the reaction AMP + diphosphate = 5-phospho-alpha-D-ribose 1-diphosphate + adenine. Its pathway is purine metabolism; AMP biosynthesis via salvage pathway; AMP from adenine: step 1/1. Its function is as follows. Catalyzes a salvage reaction resulting in the formation of AMP, that is energically less costly than de novo synthesis. In Haemophilus influenzae (strain PittEE), this protein is Adenine phosphoribosyltransferase.